Here is a 303-residue protein sequence, read N- to C-terminus: Tobamovirus multiplication protein 3 (303 aa).

Topologically, residues 1-48 (MRIGGVEVTKFASEMMSSSSSSAVEMLNLKEASNWWSDVNESPIWQDR) are extracellular. The helical transmembrane segment at 49-69 (IFHVLAVLYGIVSLVAVIQLV) threads the bilayer. The Cytoplasmic segment spans residues 70–82 (RIQLRVPEYGWTT). The helical transmembrane segment at 83–103 (QKVFHFLNFVVNGVRAVVFVF) threads the bilayer. Residues 104–117 (RRNVQFMQPEILQH) lie on the Extracellular side of the membrane. The helical transmembrane segment at 118-138 (ILLDIPSLAFFTTYALLVLFW) threads the bilayer. Residues 139–156 (AEIYYQARAVSTDGLRPS) lie on the Cytoplasmic side of the membrane. A helical membrane pass occupies residues 157 to 177 (FFTINAVVYVVQIALWLVLWW). The Extracellular portion of the chain corresponds to 178–183 (KPVRVM). A helical membrane pass occupies residues 184-204 (VILSKMFFAGVSLFAALGFLL). Topologically, residues 205-232 (YGGRLFLMLQRFPVESKGRRKKLQEVGY) are cytoplasmic. A helical transmembrane segment spans residues 233 to 253 (VTTICFTCFLIRCIMMCFAAF). The Extracellular portion of the chain corresponds to 254 to 265 (DEGANLDVLDHP). Residues 266–286 (ILNFIYYLLVEILPSSLVLFI) form a helical membrane-spanning segment. At 287–303 (LRKLPPKRGITQYHQIR) the chain is on the cytoplasmic side.

The protein belongs to the plant tobamovirus multiplication TOM1 protein family. As to quaternary structure, constituent of tobamovirus replication complex. Interacts with the helicase domain of tobamovirus-encoded replication proteins.

It localises to the vacuole membrane. Contributes to the intracellular multiplication of tobamoviruses, probably being a membrane anchor promoting the formation of the replication complex. The chain is Tobamovirus multiplication protein 3 (TOM3) from Arabidopsis thaliana (Mouse-ear cress).